Reading from the N-terminus, the 257-residue chain is 7-carboxy-7-deazaguanine synthase (257 aa).

Residues 1–25 (MKSVDHPVDVLPAEHSAETPGDARA) form a disordered region. Substrate-binding positions include 39–41 (RQG) and arginine 54. A Radical SAM core domain is found at 45 to 244 (LTGTESVFIR…AISRGYQYCD (200 aa)). Positions 58, 62, and 65 each coordinate [4Fe-4S] cluster. Threonine 67 provides a ligand contact to Mg(2+). Residue threonine 99 participates in substrate binding. Residues glycine 101 and 143-145 (SPK) each bind S-adenosyl-L-methionine.

It belongs to the radical SAM superfamily. 7-carboxy-7-deazaguanine synthase family. In terms of assembly, homodimer. [4Fe-4S] cluster is required as a cofactor. It depends on S-adenosyl-L-methionine as a cofactor. Requires Mg(2+) as cofactor.

It carries out the reaction 6-carboxy-5,6,7,8-tetrahydropterin + H(+) = 7-carboxy-7-deazaguanine + NH4(+). It functions in the pathway purine metabolism; 7-cyano-7-deazaguanine biosynthesis. Its function is as follows. Catalyzes the complex heterocyclic radical-mediated conversion of 6-carboxy-5,6,7,8-tetrahydropterin (CPH4) to 7-carboxy-7-deazaguanine (CDG), a step common to the biosynthetic pathways of all 7-deazapurine-containing compounds. The polypeptide is 7-carboxy-7-deazaguanine synthase (Rhodopirellula baltica (strain DSM 10527 / NCIMB 13988 / SH1)).